A 329-amino-acid chain; its full sequence is MYG1 protein (329 aa).

The protein belongs to the MYG1 family.

In Dictyostelium discoideum (Social amoeba), this protein is MYG1 protein.